A 103-amino-acid polypeptide reads, in one-letter code: Large ribosomal subunit protein bL21 (103 aa).

The protein belongs to the bacterial ribosomal protein bL21 family. Part of the 50S ribosomal subunit. Contacts protein L20.

In terms of biological role, this protein binds to 23S rRNA in the presence of protein L20. The sequence is that of Large ribosomal subunit protein bL21 from Lactobacillus johnsonii (strain CNCM I-12250 / La1 / NCC 533).